The sequence spans 184 residues: Gremlin-1 (184 aa).

The first 24 residues, 1–24 (MSRTAYTVGALLLLLGTLLPAAEG), serve as a signal peptide directing secretion. Positions 24-77 (GKKKGSQGAIPPPDKAQHNDSEQTQSPQQPGSRNRGRGQGRGTAMPGEEVLESS) are disordered. Residue asparagine 42 is glycosylated (N-linked (GlcNAc...) asparagine). Intrachain disulfides connect cysteine 94-cysteine 144, cysteine 108-cysteine 158, cysteine 118-cysteine 176, and cysteine 122-cysteine 178. The CTCK domain occupies 94 to 184 (CKTQPLKQTI…QCRCISIDLD (91 aa)).

The protein belongs to the DAN family. Homodimer; can also form homooligomers. Interacts with BMP2; can form higher oligomers with BMP2. Interacts with SLIT1 and SLIT2 in a glycosylation-dependent manner. Highly expressed in small intestine, fetal brain and colon. Expression is restricted to intestinal subepithelial myofibroblasts (ISEMFs) at the crypt base. In subjects with HMPS1, by contrast, GREM1 is expressed, not only in basal ISEMFs, but also at very high levels in epithelial cells (predominantly colonocytes), with expression extending most of the way up the sides of the crypt. Weakly expressed in brain, ovary, prostate, pancreas and skeletal muscle. In brain found in the region localized around the internal capsule in the large subcortical nuclei, including caudate, putamen, substantia nigra, thalamus and subthalamus. Predominantly expressed in normal cells including neurons, astrocytes and fibroblasts.

It localises to the secreted. In terms of biological role, cytokine that may play an important role during carcinogenesis and metanephric kidney organogenesis, as a BMP antagonist required for early limb outgrowth and patterning in maintaining the FGF4-SHH feedback loop. Down-regulates the BMP4 signaling in a dose-dependent manner. Antagonist of BMP2; inhibits BMP2-mediated differentiation of osteoblasts (in vitro). Acts as inhibitor of monocyte chemotaxis. Can inhibit the growth or viability of normal cells but not transformed cells when is overexpressed. This chain is Gremlin-1 (GREM1), found in Homo sapiens (Human).